A 132-amino-acid chain; its full sequence is Large ribosomal subunit protein eL8 (132 aa).

Position 8 is an N6-acetyllysine; alternate (Lys8). Residue Lys8 forms a Glycyl lysine isopeptide (Lys-Gly) (interchain with G-Cter in SUMO2); alternate linkage. Lys36 is covalently cross-linked (Glycyl lysine isopeptide (Lys-Gly) (interchain with G-Cter in SUMO2)). Residue Lys128 is modified to N6-acetyllysine.

The protein belongs to the eukaryotic ribosomal protein eL8 family. Component of the large ribosomal subunit. Interacts with CRY1. Interacts with DICER1, AGO2, TARBP2, MOV10 and EIF6; they form a large RNA-induced silencing complex (RISC).

Its subcellular location is the cytoplasm. Component of the large ribosomal subunit. The ribosome is a large ribonucleoprotein complex responsible for the synthesis of proteins in the cell. This Sus scrofa (Pig) protein is Large ribosomal subunit protein eL8 (RPL7A).